A 562-amino-acid polypeptide reads, in one-letter code: MSESPLTIVIVDEDPVFRLGLITVLGRETGVQVLGEGETLDDLRQQLETLAPSILLIDPQFPRRSQSAWPLLRQLSSAYPQVKICLLTASLEYDQLLAAKTQGIAAYFPKGTAIADLVTGLKQVHFGQTCWPSLQTVNAPPLSLWEKLIWPLFRDGLGQIEQSLQQVQKSLQVPSLSDFDRLFWRGRERELKFAQWLVRNLLPQRLKTWHKATNILTATTTVLPPSPPSPRRSGVRTITLRPPSNLTALGQILQQMPLQVENLTAIPLELDILQPLKRQELLSLGQQQLETTINELKALRITPAQLPENCLSIVAEMWRSLSLTFFGKYCQPKSEFSLEQIQSLLEVYQPIICREKLVKIPFVVPLFHHLLFGEPLVVNQKAYPLGSTEAQQYSDLYAQNLVIQLANSTMVFILNYFADHEAIKLALYEYSMLSSRQVARFRNDLAWYYQFSRYWLNPKQIFESQHTLLYLTPAGIVTTQVYAPRQQELTQLRAVPWFVTIVLECRDALSPRVRSVIEFVGNGLVFLLTQVVGRAIGLVGKGIIQGIGNTWQESRSQQKRSN.

Residues 7 to 125 enclose the Response regulatory domain; sequence TIVIVDEDPV…DLVTGLKQVH (119 aa).

The protein belongs to the ycf55 family.

This is Ycf55-like protein from Synechocystis sp. (strain ATCC 27184 / PCC 6803 / Kazusa).